Reading from the N-terminus, the 222-residue chain is uncharacterized protein (222 aa).

In terms of domain architecture, HTH gntR-type spans 8 to 77 (AKKGQIIYRY…GNAGYFVAKN (70 aa)).

This is an uncharacterized protein from Mycoplasma pneumoniae (strain ATCC 29342 / M129 / Subtype 1) (Mycoplasmoides pneumoniae).